Reading from the N-terminus, the 39-residue chain is Cytochrome b559 subunit beta (39 aa).

Residues 14–30 (WLAVHGLAVPTVFFLGS) form a helical membrane-spanning segment. Histidine 18 is a binding site for heme.

This sequence belongs to the PsbE/PsbF family. Heterodimer of an alpha subunit and a beta subunit. PSII is composed of 1 copy each of membrane proteins PsbA, PsbB, PsbC, PsbD, PsbE, PsbF, PsbH, PsbI, PsbJ, PsbK, PsbL, PsbM, PsbT, PsbX, PsbY, PsbZ, Psb30/Ycf12, at least 3 peripheral proteins of the oxygen-evolving complex and a large number of cofactors. It forms dimeric complexes. Heme b serves as cofactor.

It localises to the plastid. The protein localises to the chloroplast thylakoid membrane. This b-type cytochrome is tightly associated with the reaction center of photosystem II (PSII). PSII is a light-driven water:plastoquinone oxidoreductase that uses light energy to abstract electrons from H(2)O, generating O(2) and a proton gradient subsequently used for ATP formation. It consists of a core antenna complex that captures photons, and an electron transfer chain that converts photonic excitation into a charge separation. This Cedrus deodara (Deodar cedar) protein is Cytochrome b559 subunit beta.